The following is an 825-amino-acid chain: Probable phosphoketolase (825 aa).

This sequence belongs to the XFP family. It depends on thiamine diphosphate as a cofactor.

The chain is Probable phosphoketolase from Schizosaccharomyces pombe (strain 972 / ATCC 24843) (Fission yeast).